We begin with the raw amino-acid sequence, 230 residues long: Ion-translocating oxidoreductase complex subunit E (230 aa).

Helical transmembrane passes span 11–31 (GMWA…LLAV), 39–59 (LGLG…VSLV), 69–89 (IPVF…LMNA), 93–113 (GLYL…IIIG), 132–152 (FWMG…REII), and 182–202 (SFLL…LIAL).

This sequence belongs to the NqrDE/RnfAE family. The complex is composed of six subunits: RnfA, RnfB, RnfC, RnfD, RnfE and RnfG.

It localises to the cell inner membrane. In terms of biological role, part of a membrane-bound complex that couples electron transfer with translocation of ions across the membrane. This is Ion-translocating oxidoreductase complex subunit E from Vibrio atlanticus (strain LGP32) (Vibrio splendidus (strain Mel32)).